We begin with the raw amino-acid sequence, 363 residues long: Pyruvate dehydrogenase E1 component subunit beta-1, mitochondrial (363 aa).

A mitochondrion-targeting transit peptide spans 1 to 29 (MLGILRQRAIDGASTLRRTRFALVSARSY). A thiamine diphosphate-binding site is contributed by Glu92. Positions 145, 193, 194, and 196 each coordinate K(+). Residues Lys247 and Lys254 each participate in a glycyl lysine isopeptide (Lys-Gly) (interchain with G-Cter in ubiquitin) cross-link.

Tetramer of 2 alpha and 2 beta subunits. Thiamine diphosphate serves as cofactor. Expressed in roots, immature rosettes, and mature rosettes.

The protein resides in the mitochondrion matrix. The catalysed reaction is N(6)-[(R)-lipoyl]-L-lysyl-[protein] + pyruvate + H(+) = N(6)-[(R)-S(8)-acetyldihydrolipoyl]-L-lysyl-[protein] + CO2. The pyruvate dehydrogenase complex catalyzes the overall conversion of pyruvate to acetyl-CoA and CO(2). It contains multiple copies of three enzymatic components: pyruvate dehydrogenase (E1), dihydrolipoamide acetyltransferase (E2) and lipoamide dehydrogenase (E3). This chain is Pyruvate dehydrogenase E1 component subunit beta-1, mitochondrial (PDH2), found in Arabidopsis thaliana (Mouse-ear cress).